A 141-amino-acid polypeptide reads, in one-letter code: Hemoglobin subunit alpha (141 aa).

A Globin domain is found at 1–141; it reads VLSSADKNNV…VSTVLTSKYR (141 aa). Ser-3 is subject to Phosphoserine. 2 positions are modified to N6-succinyllysine: Lys-7 and Lys-11. Residue Lys-16 is modified to N6-acetyllysine; alternate. An N6-succinyllysine; alternate modification is found at Lys-16. At Tyr-24 the chain carries Phosphotyrosine. Ser-35 carries the phosphoserine modification. Lys-40 carries the N6-succinyllysine modification. The residue at position 49 (Ser-49) is a Phosphoserine. His-58 is a binding site for O2. His-87 lines the heme b pocket. Ser-102 carries the phosphoserine modification. Thr-108 is subject to Phosphothreonine. Ser-124 is modified (phosphoserine). Residues Thr-134 and Thr-137 each carry the phosphothreonine modification. The residue at position 138 (Ser-138) is a Phosphoserine.

Belongs to the globin family. As to quaternary structure, heterotetramer of two alpha chains and two beta chains. Red blood cells.

Involved in oxygen transport from the lung to the various peripheral tissues. Functionally, hemopressin acts as an antagonist peptide of the cannabinoid receptor CNR1. Hemopressin-binding efficiently blocks cannabinoid receptor CNR1 and subsequent signaling. In Panthera pardus saxicolor (Northern Persian leopard), this protein is Hemoglobin subunit alpha (HBA).